We begin with the raw amino-acid sequence, 186 residues long: Small ribosomal subunit protein eS7 (186 aa).

Belongs to the eukaryotic ribosomal protein eS7 family. Component of the small ribosomal subunit. Mature ribosomes consist of a small (40S) and a large (60S) subunit. The 40S subunit contains about 32 different proteins and 1 molecule of RNA (18S). The 60S subunit contains 45 different proteins and 3 molecules of RNA (25S, 5.8S and 5S).

The protein resides in the cytoplasm. Functionally, component of the ribosome, a large ribonucleoprotein complex responsible for the synthesis of proteins in the cell. The small ribosomal subunit (SSU) binds messenger RNAs (mRNAs) and translates the encoded message by selecting cognate aminoacyl-transfer RNA (tRNA) molecules. The large subunit (LSU) contains the ribosomal catalytic site termed the peptidyl transferase center (PTC), which catalyzes the formation of peptide bonds, thereby polymerizing the amino acids delivered by tRNAs into a polypeptide chain. The nascent polypeptides leave the ribosome through a tunnel in the LSU and interact with protein factors that function in enzymatic processing, targeting, and the membrane insertion of nascent chains at the exit of the ribosomal tunnel. RPS7A is involved in nucleolar processing of pre-18S ribosomal RNA and ribosome assembly. This chain is Small ribosomal subunit protein eS7 (RPS7A), found in Candida albicans (strain SC5314 / ATCC MYA-2876) (Yeast).